The chain runs to 130 residues: Small ribosomal subunit protein uS9 (130 aa).

Residues 108 to 130 form a disordered region; the sequence is SREVERKKVGLRKARKRPQYSKR. The span at 116 to 130 shows a compositional bias: basic residues; sequence VGLRKARKRPQYSKR.

This sequence belongs to the universal ribosomal protein uS9 family.

This Cellvibrio japonicus (strain Ueda107) (Pseudomonas fluorescens subsp. cellulosa) protein is Small ribosomal subunit protein uS9.